We begin with the raw amino-acid sequence, 1026 residues long: Translation initiation factor IF-2, chloroplastic (1026 aa).

The transit peptide at 1-63 directs the protein to the chloroplast; the sequence is MPSMLVLVGT…KKWLCRYSVS (63 aa). The span at 158 to 173 shows a compositional bias: basic and acidic residues; it reads AEKLEIPKPGNKEGGE. 3 disordered regions span residues 158–208, 230–284, and 300–393; these read AEKL…TMKS, FNRG…PPVK, and VSEE…KWSK. Over residues 178–194 the composition is skewed to polar residues; sequence SQPSANSSNSRNGSYAN. The segment covering 254-269 has biased composition (pro residues); sequence LAPPQPPFRPQPPVRP. A compositionally biased stretch (basic and acidic residues) spans 306–317; it reads SSVKSKERKPIL. Residues 384 to 393 show a composition bias toward basic residues; the sequence is SGRKGRKWSK. Positions 499-672 constitute a tr-type G domain; it reads DRPPVITIMG…MLVAELQELK (174 aa). Residues 508–515 form a G1 region; it reads GHVDHGKT. Residue 508 to 515 coordinates GTP; sequence GHVDHGKT. Residues 533 to 537 form a G2 region; that stretch reads GITQG. Residues 558-561 form a G3 region; the sequence is DTPG. GTP contacts are provided by residues 558-562 and 612-615; these read DTPGH and NKID. The segment at 612-615 is G4; it reads NKID. Residues 648–650 form a G5 region; sequence SAL.

Belongs to the TRAFAC class translation factor GTPase superfamily. Classic translation factor GTPase family. IF-2 subfamily.

The protein resides in the plastid. It localises to the chloroplast. One of the essential components for the initiation of protein synthesis. Protects formylmethionyl-tRNA from spontaneous hydrolysis and promotes its binding to the 30S ribosomal subunits. Also involved in the hydrolysis of GTP during the formation of the 70S ribosomal complex. This Arabidopsis thaliana (Mouse-ear cress) protein is Translation initiation factor IF-2, chloroplastic.